Consider the following 325-residue polypeptide: Centromere protein O (325 aa).

The segment at 1-35 (MEEERNSDEKENALCGRSLTAASRDGGGRMPAAPL) is disordered. The stretch at 55–112 (LEMLEAQAHELGLKQEEKEQQEKKLDRLKARVQELRARRDELRAKVELQEKRLLDKEG) forms a coiled coil.

The protein belongs to the CENP-O/MCM21 family. Component of the CENPA-HI complex, at least composed of CENPH, CENPI, CENPK, CENPL, CENPM, CENPO and CENPP. Component of a discrete complex composed of at least CENPO, CENPP, CENPQ, CENPR and CENPU.

It localises to the nucleus. The protein localises to the chromosome. It is found in the centromere. In terms of biological role, component of the CENPA-HI complex, a centromeric complex involved in assembly of kinetochore proteins, mitotic progression and chromosome segregation. Involved in kinetochore assembly and required for recovery from spindle damage. This is Centromere protein O (CENPO) from Gallus gallus (Chicken).